A 221-amino-acid polypeptide reads, in one-letter code: Telomere repeats-binding bouquet formation protein 2 (221 aa).

Belongs to the TERB2 family. Component of the MAJIN-TERB1-TERB2 complex, composed of MAJIN, TERB1 and TERB2.

It localises to the chromosome. The protein localises to the telomere. The protein resides in the nucleus inner membrane. Functionally, meiosis-specific telomere-associated protein involved in meiotic telomere attachment to the nucleus inner membrane, a crucial step for homologous pairing and synapsis. Component of the MAJIN-TERB1-TERB2 complex, which promotes telomere cap exchange by mediating attachment of telomeric DNA to the inner nuclear membrane and replacement of the protective cap of telomeric chromosomes: in early meiosis, the MAJIN-TERB1-TERB2 complex associates with telomeric DNA and the shelterin/telosome complex. During prophase, the complex matures and promotes release of the shelterin/telosome complex from telomeric DNA. This is Telomere repeats-binding bouquet formation protein 2 from Bos taurus (Bovine).